The primary structure comprises 665 residues: Coiled-coil domain-containing protein 138 (665 aa).

The residue at position 48 (Thr48) is a Phosphothreonine. Ser49 carries the post-translational modification Phosphoserine. Positions 198–323 (QQKFAEELQK…YEFMTIQRLK (126 aa)) form a coiled coil. A Phosphoserine modification is found at Ser469.

The protein is Coiled-coil domain-containing protein 138 (CCDC138) of Macaca fascicularis (Crab-eating macaque).